A 354-amino-acid chain; its full sequence is Period circadian protein (354 aa).

PAS domains follow at residues 1-55 (GIVM…VNGQ) and 133-235 (FVMR…HIIE). The segment at 318–354 (IQDPDHSYYQRDSVMLGGISPHHDYNDSKSSTGTPLS) is disordered. The segment covering 345–354 (SKSSTGTPLS) has biased composition (polar residues).

Forms a heterodimer with timeless (TIM); the complex then translocates into the nucleus. Phosphorylated with a circadian rhythmicity.

It localises to the nucleus. In terms of biological role, involved in the generation of biological rhythms. The biological cycle depends on the rhythmic formation and nuclear localization of the tim-per complex. Light induces the degradation of tim, which promotes elimination of per. Nuclear activity of the heterodimer coordinatively regulates per and tim transcription negative feedback loop. Behaves as a negative element in circadian transcriptional loop. Does not appear to bind DNA, suggesting indirect transcriptional inhibition. This is Period circadian protein (per) from Manduca sexta (Tobacco hawkmoth).